The sequence spans 65 residues: Large ribosomal subunit protein bL35 (65 aa).

The protein belongs to the bacterial ribosomal protein bL35 family.

In Thiobacillus denitrificans (strain ATCC 25259 / T1), this protein is Large ribosomal subunit protein bL35.